Reading from the N-terminus, the 559-residue chain is Membrane protein insertase YidC (559 aa).

Transmembrane regions (helical) follow at residues Ile5–Phe25, Ala332–Phe352, Tyr355–Phe375, Leu429–Ile449, Leu474–Leu494, and Phe520–Trp540.

This sequence belongs to the OXA1/ALB3/YidC family. Type 1 subfamily. Interacts with the Sec translocase complex via SecD. Specifically interacts with transmembrane segments of nascent integral membrane proteins during membrane integration.

It localises to the cell inner membrane. In terms of biological role, required for the insertion and/or proper folding and/or complex formation of integral membrane proteins into the membrane. Involved in integration of membrane proteins that insert both dependently and independently of the Sec translocase complex, as well as at least some lipoproteins. Aids folding of multispanning membrane proteins. This chain is Membrane protein insertase YidC, found in Rickettsia bellii (strain OSU 85-389).